Here is a 354-residue protein sequence, read N- to C-terminus: Guanine nucleotide-binding protein G(o) subunit alpha (354 aa).

Residue Gly-2 is the site of N-myristoyl glycine attachment. A lipid anchor (S-palmitoyl cysteine) is attached at Cys-3. The 323-residue stretch at 32 to 354 (KDIKLLLLGA…ANNLRGCGLY (323 aa)) folds into the G-alpha domain. Positions 35-48 (KLLLLGAGESGKST) are G1 motif. Residues 40–47 (GAGESGKS), 176–182 (LRTRVKT), 201–205 (DVGGQ), 270–273 (NKKD), and Ala-326 each bind GTP. 2 residues coordinate Mg(2+): Ser-47 and Thr-182. Residues 174–182 (DILRTRVKT) form a G2 motif region. Positions 197-206 (FKLFDVGGQR) are G3 motif. The interval 266 to 273 (ILFLNKKD) is G4 motif. Residues 324 to 329 (TCATDT) are G5 motif.

The protein belongs to the G-alpha family. G(i/o/t/z) subfamily. G proteins are composed of 3 units; alpha, beta and gamma. The alpha chain contains the guanine nucleotide binding site.

Functionally, guanine nucleotide-binding proteins (G proteins) are involved as modulators or transducers in various transmembrane signaling systems. The G(o) protein function is not clear. This is Guanine nucleotide-binding protein G(o) subunit alpha from Lymnaea stagnalis (Great pond snail).